Consider the following 54-residue polypeptide: Large ribosomal subunit protein bL33B (54 aa).

This sequence belongs to the bacterial ribosomal protein bL33 family.

This chain is Large ribosomal subunit protein bL33B (rpmG2), found in Streptomyces coelicolor (strain ATCC BAA-471 / A3(2) / M145).